We begin with the raw amino-acid sequence, 329 residues long: Sideroflexin (329 aa).

Transmembrane regions (helical) follow at residues 95–115 (AFLP…ASIG), 147–167 (ILEA…GLGW), 183–203 (LRMM…VLIM), 238–258 (FSRA…MGLF), and 274–294 (LNLA…IALF).

The protein belongs to the sideroflexin family.

The protein resides in the mitochondrion membrane. Functionally, mitochondrial amino-acid transporter that mediates transport of serine into mitochondria. The chain is Sideroflexin from Dictyostelium discoideum (Social amoeba).